Consider the following 389-residue polypeptide: GTPase Obg (389 aa).

An Obg domain is found at 1-159 (MKFVDEAVIK…RELRLELLLL (159 aa)). Residues 160-333 (ADVGMLGLPN…LCYKLADFME (174 aa)) form the OBG-type G domain. Residues 166 to 173 (GLPNAGKS), 191 to 195 (FTTLI), 213 to 216 (DIPG), 283 to 286 (NKVD), and 314 to 316 (SAV) each bind GTP. Mg(2+) contacts are provided by serine 173 and threonine 193. The tract at residues 359-389 (NQGEVITEDDDDDWDDWDDEEDDGHVIYVRE) is disordered. The span at 364–381 (ITEDDDDDWDDWDDEEDD) shows a compositional bias: acidic residues.

Belongs to the TRAFAC class OBG-HflX-like GTPase superfamily. OBG GTPase family. In terms of assembly, monomer. Mg(2+) serves as cofactor.

It is found in the cytoplasm. In terms of biological role, an essential GTPase which binds GTP, GDP and possibly (p)ppGpp with moderate affinity, with high nucleotide exchange rates and a fairly low GTP hydrolysis rate. Plays a role in control of the cell cycle, stress response, ribosome biogenesis and in those bacteria that undergo differentiation, in morphogenesis control. This chain is GTPase Obg, found in Vibrio vulnificus (strain CMCP6).